The chain runs to 326 residues: Vacuolar protein sorting-associated protein 26A-A (326 aa).

A disordered region spans residues 306–326; sequence TNFHQRFEPQEPQASAEEPEI. A compositionally biased stretch (low complexity) spans 315–326; the sequence is QEPQASAEEPEI.

The protein belongs to the VPS26 family. Component of the heterotrimeric retromer cargo-selective complex (CSC) which is believed to associate with variable sorting nexins to form functionally distinct retromer complex variants.

The protein resides in the cytoplasm. The protein localises to the endosome membrane. It is found in the early endosome. In terms of biological role, acts as a component of the retromer cargo-selective complex (CSC). The CSC is believed to be the core functional component of retromer or respective retromer complex variants acting to prevent missorting of selected transmembrane cargo proteins into the lysosomal degradation pathway. Retromer mediates retrograde transport of cargo proteins from endosomes to the trans-Golgi network (TGN). This is Vacuolar protein sorting-associated protein 26A-A (vps26a-a) from Xenopus laevis (African clawed frog).